The chain runs to 158 residues: 2-C-methyl-D-erythritol 2,4-cyclodiphosphate synthase (158 aa).

Residues Asp-8 and His-10 each coordinate a divalent metal cation. Residues 8–10 (DVH) and 34–35 (HS) contribute to the 4-CDP-2-C-methyl-D-erythritol 2-phosphate site. His-42 is a binding site for a divalent metal cation. Residues 56–58 (DIG), 61–65 (FPDTD), 100–106 (AQRPKMA), 132–135 (TTEE), Phe-139, and Arg-142 contribute to the 4-CDP-2-C-methyl-D-erythritol 2-phosphate site.

It belongs to the IspF family. In terms of assembly, homotrimer. A divalent metal cation serves as cofactor.

It catalyses the reaction 4-CDP-2-C-methyl-D-erythritol 2-phosphate = 2-C-methyl-D-erythritol 2,4-cyclic diphosphate + CMP. It functions in the pathway isoprenoid biosynthesis; isopentenyl diphosphate biosynthesis via DXP pathway; isopentenyl diphosphate from 1-deoxy-D-xylulose 5-phosphate: step 4/6. Involved in the biosynthesis of isopentenyl diphosphate (IPP) and dimethylallyl diphosphate (DMAPP), two major building blocks of isoprenoid compounds. Catalyzes the conversion of 4-diphosphocytidyl-2-C-methyl-D-erythritol 2-phosphate (CDP-ME2P) to 2-C-methyl-D-erythritol 2,4-cyclodiphosphate (ME-CPP) with a corresponding release of cytidine 5-monophosphate (CMP). The sequence is that of 2-C-methyl-D-erythritol 2,4-cyclodiphosphate synthase from Pelobacter propionicus (strain DSM 2379 / NBRC 103807 / OttBd1).